Consider the following 94-residue polypeptide: Antifungal protein (94 aa).

A signal peptide spans 1-21; it reads MKFVSLASLGFALVAALGAVA. A propeptide spanning residues 22–43 is cleaved from the precursor; it reads TPVEADSLTAGGLDARDESAVL. Disulfide bonds link C50-C76, C57-C83, C69-C71, and C92-C94.

Belongs to the antifungal protein pafB family.

It localises to the secreted. It is found in the host cytoplasm. Antifungal protein that acts as an inhibitor of growth of a variety of fungal species. This Aspergillus giganteus protein is Antifungal protein (afp).